The chain runs to 256 residues: Acetyl-coenzyme A carboxylase carboxyl transferase subunit alpha (256 aa).

Positions 1–236 constitute a CoA carboxyltransferase C-terminal domain; it reads MTDVARILKE…KLHLIDEITQ (236 aa).

This sequence belongs to the AccA family. As to quaternary structure, acetyl-CoA carboxylase is a heterohexamer composed of biotin carboxyl carrier protein (AccB), biotin carboxylase (AccC) and two subunits each of ACCase subunit alpha (AccA) and ACCase subunit beta (AccD).

The protein localises to the cytoplasm. The catalysed reaction is N(6)-carboxybiotinyl-L-lysyl-[protein] + acetyl-CoA = N(6)-biotinyl-L-lysyl-[protein] + malonyl-CoA. It functions in the pathway lipid metabolism; malonyl-CoA biosynthesis; malonyl-CoA from acetyl-CoA: step 1/1. Functionally, component of the acetyl coenzyme A carboxylase (ACC) complex. First, biotin carboxylase catalyzes the carboxylation of biotin on its carrier protein (BCCP) and then the CO(2) group is transferred by the carboxyltransferase to acetyl-CoA to form malonyl-CoA. This chain is Acetyl-coenzyme A carboxylase carboxyl transferase subunit alpha, found in Streptococcus equi subsp. zooepidemicus (strain H70).